A 122-amino-acid polypeptide reads, in one-letter code: MNKKDTCEIFCYDEEKVNRIQGDLKTIDIVSVAQMLKAIADENRAKITYALCQDEELCVCDIANIIGITVANASHHLRTLHKQGIVRYRKEGKLAFYSLDDEHIRQIMMIVLEHKKEVNVNV.

4 residues coordinate Cd(2+): Cys7, Cys11, Cys58, and Cys60. Residues 24-119 (LKTIDIVSVA…IVLEHKKEVN (96 aa)) enclose the HTH arsR-type domain. The H-T-H motif DNA-binding region spans 59 to 78 (VCDIANIIGITVANASHHLR).

In terms of assembly, homodimer.

Metal-binding repressor for the cad operon. Involved in resistance to heavy metals, such as cadmium, bismuth, zinc or lead. Metal binding causes the repressor to dissociate from the DNA. This Alkalihalophilus pseudofirmus (strain ATCC BAA-2126 / JCM 17055 / OF4) (Bacillus pseudofirmus) protein is Cadmium resistance transcriptional regulatory protein CadC (cadC).